Reading from the N-terminus, the 735-residue chain is Phosphoribosylformylglycinamidine synthase subunit PurL (735 aa).

Residue His48 is part of the active site. The ATP site is built by Tyr51 and Lys90. Glu92 contacts Mg(2+). Substrate contacts are provided by residues Ser93–His96 and Arg115. Catalysis depends on His94, which acts as the Proton acceptor. Asp116 is a binding site for Mg(2+). Gln239 lines the substrate pocket. Asp267 is a binding site for Mg(2+). Glu311–Gln313 contributes to the substrate binding site. ATP is bound by residues Asp492 and Gly529. Asn530 contributes to the Mg(2+) binding site. Ser532 lines the substrate pocket.

Belongs to the FGAMS family. Monomer. Part of the FGAM synthase complex composed of 1 PurL, 1 PurQ and 2 PurS subunits.

Its subcellular location is the cytoplasm. The enzyme catalyses N(2)-formyl-N(1)-(5-phospho-beta-D-ribosyl)glycinamide + L-glutamine + ATP + H2O = 2-formamido-N(1)-(5-O-phospho-beta-D-ribosyl)acetamidine + L-glutamate + ADP + phosphate + H(+). Its pathway is purine metabolism; IMP biosynthesis via de novo pathway; 5-amino-1-(5-phospho-D-ribosyl)imidazole from N(2)-formyl-N(1)-(5-phospho-D-ribosyl)glycinamide: step 1/2. Its function is as follows. Part of the phosphoribosylformylglycinamidine synthase complex involved in the purines biosynthetic pathway. Catalyzes the ATP-dependent conversion of formylglycinamide ribonucleotide (FGAR) and glutamine to yield formylglycinamidine ribonucleotide (FGAM) and glutamate. The FGAM synthase complex is composed of three subunits. PurQ produces an ammonia molecule by converting glutamine to glutamate. PurL transfers the ammonia molecule to FGAR to form FGAM in an ATP-dependent manner. PurS interacts with PurQ and PurL and is thought to assist in the transfer of the ammonia molecule from PurQ to PurL. The chain is Phosphoribosylformylglycinamidine synthase subunit PurL from Bradyrhizobium sp. (strain BTAi1 / ATCC BAA-1182).